We begin with the raw amino-acid sequence, 555 residues long: TBCC domain-containing protein 1 (555 aa).

The 132-residue stretch at Pro-302–Leu-433 folds into the C-CAP/cofactor C-like domain.

This sequence belongs to the TBCC family.

It localises to the cytoplasm. The protein resides in the cytoskeleton. Its subcellular location is the microtubule organizing center. It is found in the centrosome. The protein localises to the spindle pole. Functionally, may play a role in the regulation of centrosome and Golgi apparatus positioning. The sequence is that of TBCC domain-containing protein 1 (TBCCD1) from Gallus gallus (Chicken).